A 181-amino-acid polypeptide reads, in one-letter code: Segregation and condensation protein B (181 aa).

Belongs to the ScpB family. In terms of assembly, homodimer. Homodimerization may be required to stabilize the binding of ScpA to the Smc head domains. Component of a cohesin-like complex composed of ScpA, ScpB and the Smc homodimer, in which ScpA and ScpB bind to the head domain of Smc. The presence of the three proteins is required for the association of the complex with DNA.

The protein resides in the cytoplasm. Participates in chromosomal partition during cell division. May act via the formation of a condensin-like complex containing Smc and ScpA that pull DNA away from mid-cell into both cell halves. This Desulforamulus reducens (strain ATCC BAA-1160 / DSM 100696 / MI-1) (Desulfotomaculum reducens) protein is Segregation and condensation protein B.